An 84-amino-acid polypeptide reads, in one-letter code: Small ribosomal subunit protein eS27-like (84 aa).

Positions M1–K16 are enriched in basic and acidic residues. The tract at residues M1 to R23 is disordered. Residues P38–S60 form a C4-type zinc finger.

Belongs to the eukaryotic ribosomal protein eS27 family. Zn(2+) is required as a cofactor.

The protein is Small ribosomal subunit protein eS27-like (RPS27L) of Bos taurus (Bovine).